Consider the following 120-residue polypeptide: Large ribosomal subunit protein uL18 (120 aa).

As to quaternary structure, part of the 50S ribosomal subunit; part of the 5S rRNA/L5/L18/L25 subcomplex. Contacts the 5S and 23S rRNAs.

This is one of the proteins that bind and probably mediate the attachment of the 5S RNA into the large ribosomal subunit, where it forms part of the central protuberance. In Rhodopseudomonas palustris (strain ATCC BAA-98 / CGA009), this protein is Large ribosomal subunit protein uL18.